Here is a 167-residue protein sequence, read N- to C-terminus: uncharacterized protein (167 aa).

Its subcellular location is the virion. This is an uncharacterized protein from Acanthamoeba polyphaga (Amoeba).